Consider the following 815-residue polypeptide: DNA gyrase subunit B (815 aa).

Residues 1 to 21 (MEKTPATGSAVAPPPVEYGTD) form a disordered region. The 116-residue stretch at 430–545 (SELYIVEGDS…AISTSRSRRS (116 aa)) folds into the Toprim domain. 3 residues coordinate Mg(2+): Glu-436, Asp-509, and Asp-511.

This sequence belongs to the type II topoisomerase GyrB family. As to quaternary structure, heterotetramer, composed of two GyrA and two GyrB chains. In the heterotetramer, GyrA contains the active site tyrosine that forms a transient covalent intermediate with DNA, while GyrB binds cofactors and catalyzes ATP hydrolysis. Mg(2+) is required as a cofactor. Requires Mn(2+) as cofactor. Ca(2+) serves as cofactor.

It is found in the cytoplasm. It catalyses the reaction ATP-dependent breakage, passage and rejoining of double-stranded DNA.. In terms of biological role, a type II topoisomerase that negatively supercoils closed circular double-stranded (ds) DNA in an ATP-dependent manner to modulate DNA topology and maintain chromosomes in an underwound state. Negative supercoiling favors strand separation, and DNA replication, transcription, recombination and repair, all of which involve strand separation. Also able to catalyze the interconversion of other topological isomers of dsDNA rings, including catenanes and knotted rings. Type II topoisomerases break and join 2 DNA strands simultaneously in an ATP-dependent manner. The sequence is that of DNA gyrase subunit B from Myxococcus xanthus.